Consider the following 114-residue polypeptide: Transcription initiation factor IIB (114 aa).

2 consecutive repeat copies span residues 1-17 (VEQK…AQEL) and 28-109 (QYVP…EQIE).

The protein belongs to the TFIIB family.

Its function is as follows. Stabilizes TBP binding to an archaeal box-A promoter. Also responsible for recruiting RNA polymerase II to the pre-initiation complex (DNA-TBP-TFIIB). The polypeptide is Transcription initiation factor IIB (tfb) (Haloarcula vallismortis (Halobacterium vallismortis)).